A 681-amino-acid chain; its full sequence is Glutamine--fructose-6-phosphate aminotransferase [isomerizing] 1 (681 aa).

Cys2 functions as the For GATase activity in the catalytic mechanism. One can recognise a Glutamine amidotransferase type-2 domain in the interval 2–287; that stretch reads CGIFAYLNYH…DDDVAAVVDG (286 aa). A phosphoserine mark is found at Ser103 and Ser243. The segment at 295 to 662 is isomerase; sequence KRTARDHPGR…LQLLAFHLAV (368 aa). 2 consecutive SIS domains span residues 359–498 and 530–671; these read HIKE…DRIS and LATE…VDFP. Substrate is bound by residues 376–377, 421–423, Thr426, and His577; these read TS and SQS.

As to quaternary structure, homotetramer, may also exist as homodimers.

It catalyses the reaction D-fructose 6-phosphate + L-glutamine = D-glucosamine 6-phosphate + L-glutamate. It participates in nucleotide-sugar biosynthesis; UDP-N-acetyl-alpha-D-glucosamine biosynthesis; alpha-D-glucosamine 6-phosphate from D-fructose 6-phosphate: step 1/1. Its activity is regulated as follows. Inhibited by 4,4'-dithiodipyridine. In terms of biological role, controls the flux of glucose into the hexosamine pathway. Most likely involved in regulating the availability of precursors for N- and O-linked glycosylation of proteins. Regulates the circadian expression of clock genes BMAL1 and CRY1. Has a role in fine tuning the metabolic fluctuations of cytosolic UDP-GlcNAc and its effects on hyaluronan synthesis that occur during tissue remodeling. This Rattus norvegicus (Rat) protein is Glutamine--fructose-6-phosphate aminotransferase [isomerizing] 1 (Gfpt1).